The sequence spans 633 residues: Chitin synthase regulatory factor 4 (633 aa).

The interval 121–151 (ATSSQETKRDRPLPNIRNSAPSATRSHSTPC) is disordered. Residues 136 to 149 (IRNSAPSATRSHST) show a composition bias toward polar residues. Residue Ser148 is modified to Phosphoserine. Sel1-like repeat units lie at residues 278–314 (AKAM…NLGY), 315–346 (TRSL…SEND), 438–474 (SSAQ…KRGE), 475–511 (TEAD…MAGN), and 512–543 (ANAQ…KAGH). Residues 583-613 (ASETSPPHAPAVSSTPVTSAPPVSQTKVTKV) are disordered. The segment covering 592–613 (PAVSSTPVTSAPPVSQTKVTKV) has biased composition (low complexity).

Its subcellular location is the cytoplasm. Functionally, involved in septum formation. Required for the proper localization of chs2 at the septum. In Schizosaccharomyces pombe (strain 972 / ATCC 24843) (Fission yeast), this protein is Chitin synthase regulatory factor 4 (chr4).